Here is a 100-residue protein sequence, read N- to C-terminus: MARKSLIQRERKRDKLEQKYHLIRRSSKKQISKVPSLSDKWEIHGKLQSPPRNSAPIRLHRRCFLTGRPRANYRDFGLSGHVLREMVHACLLPGATRSSW.

The protein belongs to the universal ribosomal protein uS14 family. In terms of assembly, part of the 30S ribosomal subunit.

Its subcellular location is the plastid. It localises to the chloroplast. In terms of biological role, binds 16S rRNA, required for the assembly of 30S particles. The chain is Small ribosomal subunit protein uS14c from Illicium oligandrum (Star anise).